The chain runs to 41 residues: Photosystem I reaction center subunit IX (41 aa).

A helical membrane pass occupies residues 7–29; it reads YLSTAPVLLTVWLSITASGIMII.

The protein belongs to the PsaJ family.

Its subcellular location is the plastid. The protein localises to the chloroplast thylakoid membrane. Its function is as follows. May help in the organization of the PsaE and PsaF subunits. In Heterosigma akashiwo (strain NIES-293 / 8280G21-1), this protein is Photosystem I reaction center subunit IX.